Consider the following 320-residue polypeptide: Transcription factor MYB80 (320 aa).

HTH myb-type domains are found at residues 9 to 65 (KENV…RPDL) and 66 to 116 (KHGQ…KKKL). 2 DNA-binding regions (H-T-H motif) span residues 37 to 61 (WRLIPKNAGLQRCGKSCRLRWTNYL) and 89 to 112 (WSLIAAQLPGRTDNDVKNYWNTKL). Residues 257-283 (TAAAEEEERRKLKGEVVDQEEIGSEGG) form a disordered region. The segment covering 263-272 (EERRKLKGEV) has biased composition (basic and acidic residues).

Expressed in the tapetum and middle layer of developing anthers. Expressed in trichomes.

It is found in the nucleus. Its function is as follows. Transcription factor that binds to the DNA sequence 5'-CCAACC-3'. Regulates directly PME5, UND and GLOX1. Essential for tapetum development in anthers and microsporogenesis. Regulates the timing of tapetal programmed cell death (PCD) which is critical for pollen development. May act through the activation of UND, encoding an A1 aspartic protease. Required for anther development by regulating tapetum development, callose dissolution and exine formation. Acts upstream of A6 and FAR2/MS2, two genes required for pollen exine formation. Negatively regulates trichome endoreduplication and trichome branching. This chain is Transcription factor MYB80, found in Arabidopsis thaliana (Mouse-ear cress).